The following is a 189-amino-acid chain: Accessory gene regulator protein B (189 aa).

5 helical membrane passes run 50 to 70, 83 to 103, 105 to 125, 143 to 163, and 164 to 184; these read VSLL…FFFI, LLCY…VGYV, VSSL…SIYA, KIKA…LNEP, and YQQL…PIFF.

This sequence belongs to the AgrB family.

The protein localises to the cell membrane. In terms of biological role, essential for the production of a quorum sensing system signal molecule, the autoinducing peptide (AIP). This quorum sensing system is responsible for the regulation of the expression of virulence factor genes. Involved in the proteolytic processing of AgrD, the precursor of AIP. This chain is Accessory gene regulator protein B, found in Staphylococcus saprophyticus subsp. saprophyticus (strain ATCC 15305 / DSM 20229 / NCIMB 8711 / NCTC 7292 / S-41).